We begin with the raw amino-acid sequence, 130 residues long: Large ribosomal subunit protein bL17 (130 aa).

The protein belongs to the bacterial ribosomal protein bL17 family. In terms of assembly, part of the 50S ribosomal subunit. Contacts protein L32.

The polypeptide is Large ribosomal subunit protein bL17 (Pectobacterium atrosepticum (strain SCRI 1043 / ATCC BAA-672) (Erwinia carotovora subsp. atroseptica)).